A 272-amino-acid polypeptide reads, in one-letter code: Regulatory protein RecX (272 aa).

The protein belongs to the RecX family.

The protein localises to the cytoplasm. Modulates RecA activity. The chain is Regulatory protein RecX from Staphylococcus saprophyticus subsp. saprophyticus (strain ATCC 15305 / DSM 20229 / NCIMB 8711 / NCTC 7292 / S-41).